Here is a 160-residue protein sequence, read N- to C-terminus: Large ribosomal subunit protein eL21 (160 aa).

2 stretches are compositionally biased toward basic and acidic residues: residues Asn-112–Gly-123 and Arg-136–Gly-145. Residues Asn-112–Gly-145 are disordered.

Belongs to the eukaryotic ribosomal protein eL21 family. As to quaternary structure, component of the large ribosomal subunit.

It is found in the cytoplasm. The protein localises to the cytosol. The protein resides in the endoplasmic reticulum. Functionally, component of the large ribosomal subunit. The ribosome is a large ribonucleoprotein complex responsible for the synthesis of proteins in the cell. In Oryctolagus cuniculus (Rabbit), this protein is Large ribosomal subunit protein eL21 (RPL21).